The sequence spans 390 residues: Fluoride export protein 1 (390 aa).

The disordered stretch occupies residues 1-22; that stretch reads MVAPLVSESQSSSIEETDEQQQ. The Cytoplasmic portion of the chain corresponds to 1-72; the sequence is MVAPLVSESQ…RFLDKTQKYY (72 aa). Residues 73 to 93 form a helical membrane-spanning segment; that stretch reads PVILNIVHGAIWGVLVRKGLM. The Extracellular segment spans residues 94–100; the sequence is SLTTYSG. A helical transmembrane segment spans residues 101 to 121; that stretch reads SFLSGVIWANFAACVVMGLAI. The Cytoplasmic portion of the chain corresponds to 122–143; that stretch reads DGEVFWIRLLEEKDYPNKGAIP. The helical transmembrane segment at 144-164 threads the bilayer; it reads VYTGLTTGFCGTVSSFSSVIL. Residues 165–185 are Extracellular-facing; sequence EAFNKAADTDIGVRHHYPNGA. The helical transmembrane segment at 186–206 threads the bilayer; that stretch reads YGIMQFLAVILAQFGLSIMGF. Residues 207–229 are Cytoplasmic-facing; the sequence is HMGKQFSAVVDNYLPLVTKRIYK. The chain crosses the membrane as a helical span at residues 230–250; the sequence is VLELTSMILGVVLVVITCILI. Residues 251-256 lie on the Extracellular side of the membrane; the sequence is GVKKQG. A helical transmembrane segment spans residues 257 to 279; that stretch reads SWRSWTFSMLFAPFGALLRYYLS. The Cytoplasmic segment spans residues 280-290; sequence KFLNNKVSNFP. The helical transmembrane segment at 291–311 threads the bilayer; it reads LGTFTANFLGTLLLAVFTLLA. Over 312-338 the chain is Extracellular; that stretch reads RGKLPGGKGHIVTNTIALHVLEGLDDG. Residues 339–359 traverse the membrane as a helical segment; the sequence is FCGGLTTVSTFVVELFGLKTL. Over 360 to 368 the chain is Cytoplasmic; that stretch reads FSYRYGTIS. The helical transmembrane segment at 369 to 389 threads the bilayer; the sequence is ILVCFAGVVLILGSYNWSVGL. Aspartate 390 is a topological domain (extracellular).

This sequence belongs to the fluoride channel Fluc/FEX (TC 1.A.43) family.

It is found in the cell membrane. It carries out the reaction fluoride(in) = fluoride(out). Fluoride channel required for the rapid expulsion of cytoplasmic fluoride. The sequence is that of Fluoride export protein 1 from Candida albicans (strain SC5314 / ATCC MYA-2876) (Yeast).